A 67-amino-acid polypeptide reads, in one-letter code: Surface composition regulator (67 aa).

The protein belongs to the GlgS family.

In terms of biological role, major determinant of cell surface composition. Negatively regulates motility, adhesion and synthesis of biofilm exopolysaccharides. The chain is Surface composition regulator from Salmonella paratyphi A (strain ATCC 9150 / SARB42).